Consider the following 61-residue polypeptide: Small ribosomal subunit protein uS14 (61 aa).

Residues Cys24, Cys27, Cys40, and Cys43 each coordinate Zn(2+).

The protein belongs to the universal ribosomal protein uS14 family. Zinc-binding uS14 subfamily. Part of the 30S ribosomal subunit. Contacts proteins S3 and S10. It depends on Zn(2+) as a cofactor.

Functionally, binds 16S rRNA, required for the assembly of 30S particles and may also be responsible for determining the conformation of the 16S rRNA at the A site. This chain is Small ribosomal subunit protein uS14, found in Roseiflexus castenholzii (strain DSM 13941 / HLO8).